A 176-amino-acid polypeptide reads, in one-letter code: Putative REP-associated tyrosine transposase (176 aa).

Mg(2+) contacts are provided by His59 and His61. Tyr148 functions as the Nucleophile in the catalytic mechanism.

It belongs to the transposase 17 family. RAYT subfamily. Homodimer. Requires Mg(2+) as cofactor.

Transposase responsible for transposition an insertion sequence (IS) element. Transposition occurs in 2 main steps, excision from the donor DNA 'top strand' into a single strand circle and its subsequent reinsertion into the DNA target. This increases the copy number of the IS. The polypeptide is Putative REP-associated tyrosine transposase (Haemophilus influenzae (strain ATCC 51907 / DSM 11121 / KW20 / Rd)).